A 167-amino-acid chain; its full sequence is Protein archease (167 aa).

The residue at position 2 (A2) is an N-acetylalanine. 3 residues coordinate Ca(2+): D39, D166, and I167.

This sequence belongs to the archease family. In terms of assembly, component of the tRNA-splicing ligase complex.

Its function is as follows. Component of the tRNA-splicing ligase complex required to facilitate the enzymatic turnover of catalytic subunit RTCB. Together with DDX1, acts by facilitating the guanylylation of RTCB, a key intermediate step in tRNA ligation. The sequence is that of Protein archease (ZBTB8OS) from Homo sapiens (Human).